The chain runs to 718 residues: Cyclomaltodextrin glucanotransferase (718 aa).

The N-terminal stretch at 1–34 is a signal peptide; the sequence is MFQMAKRVLLSTTLTFSLLAGSALPFLPASAIYA. An A1 region spans residues 35–172; sequence DADTAVTNKQ…GIKIIIDFAP (138 aa). D61, N63, N66, and N67 together coordinate Ca(2+). Cysteines 77 and 84 form a disulfide. Residues G85 and D87 each contribute to the Ca(2+) site. Position 134–135 (134–135) interacts with substrate; it reads YW. N173 contributes to the Ca(2+) binding site. Positions 173–236 are b; that stretch reads NHTSPAMETD…NLYDLADLNH (64 aa). H174 contributes to the substrate binding site. I224 contacts Ca(2+). 227–230 lines the substrate pocket; it reads NLYD. Position 233 (D233) interacts with Ca(2+). The A2 stretch occupies residues 237 to 440; the sequence is NNSTIDTYFK…LRKSNPAIAY (204 aa). R261 serves as a coordination point for substrate. Catalysis depends on D263, which acts as the Nucleophile. 266 to 267 is a binding site for substrate; it reads KH. H267 is a binding site for Ca(2+). The active-site Proton donor is E291. Substrate contacts are provided by H361, D405, and R409. Residues 441–528 are c; the sequence is GSTQQRWINN…ATAVWQYTAS (88 aa). The tract at residues 529 to 614 is d; the sequence is ETTPTIGHVG…SNAYNDFTIL (86 aa). In terms of domain architecture, IPT/TIG spans 532-612; the sequence is PTIGHVGPVM…VNSNAYNDFT (81 aa). Positions 613–718 constitute a CBM20 domain; it reads ILSGDQVSVR…GTATVTINWQ (106 aa). Residues 615–718 form an e region; sequence SGDQVSVRFV…GTATVTINWQ (104 aa).

It belongs to the glycosyl hydrolase 13 family. In terms of assembly, monomer. Ca(2+) serves as cofactor.

The protein localises to the secreted. The catalysed reaction is Cyclizes part of a (1-&gt;4)-alpha-D-glucan chain by formation of a (1-&gt;4)-alpha-D-glucosidic bond.. This chain is Cyclomaltodextrin glucanotransferase (cgtA), found in Bacillus licheniformis.